The primary structure comprises 339 residues: Ketol-acid reductoisomerase (NADP(+)) (339 aa).

The KARI N-terminal Rossmann domain occupies 1–182 (MRVYYDSDAD…GGGRAGIIET (182 aa)). Residues 24-27 (YGSQ), Arg-48, Ser-51, and 83-86 (DEGQ) each bind NADP(+). His-108 is an active-site residue. Gly-134 contacts NADP(+). Residues 183–328 (TFKEECETDL…EKLRAMMPWI (146 aa)) form the KARI C-terminal knotted domain. Mg(2+) contacts are provided by Asp-191, Glu-195, Glu-227, and Glu-231. Ser-252 is a binding site for substrate.

The protein belongs to the ketol-acid reductoisomerase family. Requires Mg(2+) as cofactor.

The catalysed reaction is (2R)-2,3-dihydroxy-3-methylbutanoate + NADP(+) = (2S)-2-acetolactate + NADPH + H(+). The enzyme catalyses (2R,3R)-2,3-dihydroxy-3-methylpentanoate + NADP(+) = (S)-2-ethyl-2-hydroxy-3-oxobutanoate + NADPH + H(+). It functions in the pathway amino-acid biosynthesis; L-isoleucine biosynthesis; L-isoleucine from 2-oxobutanoate: step 2/4. It participates in amino-acid biosynthesis; L-valine biosynthesis; L-valine from pyruvate: step 2/4. Involved in the biosynthesis of branched-chain amino acids (BCAA). Catalyzes an alkyl-migration followed by a ketol-acid reduction of (S)-2-acetolactate (S2AL) to yield (R)-2,3-dihydroxy-isovalerate. In the isomerase reaction, S2AL is rearranged via a Mg-dependent methyl migration to produce 3-hydroxy-3-methyl-2-ketobutyrate (HMKB). In the reductase reaction, this 2-ketoacid undergoes a metal-dependent reduction by NADPH to yield (R)-2,3-dihydroxy-isovalerate. This Acidiphilium cryptum (strain JF-5) protein is Ketol-acid reductoisomerase (NADP(+)).